The sequence spans 450 residues: tRNA modification GTPase MnmE (450 aa).

(6S)-5-formyl-5,6,7,8-tetrahydrofolate contacts are provided by arginine 23, glutamate 79, and lysine 118. Positions 214–374 (GITLILVGKP…LKEHILNKVG (161 aa)) constitute a TrmE-type G domain. A K(+)-binding site is contributed by asparagine 224. GTP is bound by residues 224 to 229 (NAGKSS), 243 to 249 (TSIAGTT), and 268 to 271 (DTAG). Serine 228 serves as a coordination point for Mg(2+). The K(+) site is built by threonine 243, isoleucine 245, and threonine 248. Residue threonine 249 participates in Mg(2+) binding. Lysine 450 contributes to the (6S)-5-formyl-5,6,7,8-tetrahydrofolate binding site.

Belongs to the TRAFAC class TrmE-Era-EngA-EngB-Septin-like GTPase superfamily. TrmE GTPase family. In terms of assembly, homodimer. Heterotetramer of two MnmE and two MnmG subunits. K(+) serves as cofactor.

It is found in the cytoplasm. Functionally, exhibits a very high intrinsic GTPase hydrolysis rate. Involved in the addition of a carboxymethylaminomethyl (cmnm) group at the wobble position (U34) of certain tRNAs, forming tRNA-cmnm(5)s(2)U34. The chain is tRNA modification GTPase MnmE from Francisella tularensis subsp. holarctica (strain FTNF002-00 / FTA).